The primary structure comprises 312 residues: Coiled-coil domain-containing protein 160 homolog (312 aa).

A coiled-coil region spans residues 126–281; that stretch reads SEGAKFKNQL…EERKREKTHS (156 aa).

It belongs to the CCDC160 family.

The polypeptide is Coiled-coil domain-containing protein 160 homolog (Xenopus tropicalis (Western clawed frog)).